Reading from the N-terminus, the 498-residue chain is Cytochrome P450 6B1 (498 aa).

Position 443 (Cys443) interacts with heme.

Belongs to the cytochrome P450 family. Heme is required as a cofactor. As to expression, midgut microsome.

It is found in the endoplasmic reticulum membrane. It localises to the microsome membrane. The catalysed reaction is an organic molecule + reduced [NADPH--hemoprotein reductase] + O2 = an alcohol + oxidized [NADPH--hemoprotein reductase] + H2O + H(+). Enables the insect to feed on furanocoumarin-producing plants and evolved as an adaptation for detoxification of xanthotoxin and other furanocoumarins. The polypeptide is Cytochrome P450 6B1 (CYP6B1) (Papilio polyxenes (Black swallowtail butterfly)).